A 218-amino-acid polypeptide reads, in one-letter code: Phosphoglycolate phosphatase (218 aa).

Asp-7 functions as the Nucleophile in the catalytic mechanism. Residues Asp-7, Asp-9, and Asp-167 each contribute to the Mg(2+) site.

This sequence belongs to the HAD-like hydrolase superfamily. CbbY/CbbZ/Gph/YieH family. It depends on Mg(2+) as a cofactor.

It carries out the reaction 2-phosphoglycolate + H2O = glycolate + phosphate. It functions in the pathway organic acid metabolism; glycolate biosynthesis; glycolate from 2-phosphoglycolate: step 1/1. Its function is as follows. Specifically catalyzes the dephosphorylation of 2-phosphoglycolate. Is involved in the dissimilation of the intracellular 2-phosphoglycolate formed during the DNA repair of 3'-phosphoglycolate ends, a major class of DNA lesions induced by oxidative stress. This chain is Phosphoglycolate phosphatase, found in Cereibacter sphaeroides (Rhodobacter sphaeroides).